The primary structure comprises 393 residues: MQFDNIDSALMALKNGETIIVVDDENRENEGDLVAVTEWMNDNTINFMAKEARGLICAPVSKDIAQRLDLVQMVDDNSDIFGTQFTVSIDHVDTTTGISAYERTLTAKKLIDPSSEAKDFNRPGHLFPLVAQDKGVLARNGHTEAAVDLAKLTGAKPAGVICEIMNDDGTMAKGQDLQNFKEKHQLKMITIDDLIEYRKKLEPEIEFKAKVKMPTDFGTFDMYGFKATYTDEEIVVLTKGAIRQHENVRLHSACLTGDIFHSQRCDCGAQLESSMKYINEHGGMIIYLPQEGRGIGLLNKLRAYELIEQGYDTVTANLALGFDEDLRDYHIAAQILKYFNIEHINLLSNNPSKFEGLKQYGIDIAERIEVIVPETVHNHDYMVTKKIKMGHLI.

A DHBP synthase region spans residues methionine 1–lysine 200. D-ribulose 5-phosphate-binding positions include arginine 27 to glutamate 28, aspartate 32, arginine 139 to threonine 143, and glutamate 163. Residue glutamate 28 participates in Mg(2+) binding. Histidine 142 contacts Mg(2+). The segment at leucine 201–isoleucine 393 is GTP cyclohydrolase II. Arginine 249–alanine 253 contributes to the GTP binding site. Zn(2+)-binding residues include cysteine 254, cysteine 265, and cysteine 267. Residues glutamine 270, glutamate 291 to arginine 293, and threonine 313 each bind GTP. The active-site Proton acceptor; for GTP cyclohydrolase activity is aspartate 325. Catalysis depends on arginine 327, which acts as the Nucleophile; for GTP cyclohydrolase activity. 2 residues coordinate GTP: serine 348 and lysine 353.

This sequence in the N-terminal section; belongs to the DHBP synthase family. It in the C-terminal section; belongs to the GTP cyclohydrolase II family. It depends on Mg(2+) as a cofactor. Mn(2+) serves as cofactor. Zn(2+) is required as a cofactor.

The enzyme catalyses D-ribulose 5-phosphate = (2S)-2-hydroxy-3-oxobutyl phosphate + formate + H(+). The catalysed reaction is GTP + 4 H2O = 2,5-diamino-6-hydroxy-4-(5-phosphoribosylamino)-pyrimidine + formate + 2 phosphate + 3 H(+). Its pathway is cofactor biosynthesis; riboflavin biosynthesis; 2-hydroxy-3-oxobutyl phosphate from D-ribulose 5-phosphate: step 1/1. It participates in cofactor biosynthesis; riboflavin biosynthesis; 5-amino-6-(D-ribitylamino)uracil from GTP: step 1/4. In terms of biological role, catalyzes the conversion of D-ribulose 5-phosphate to formate and 3,4-dihydroxy-2-butanone 4-phosphate. Functionally, catalyzes the conversion of GTP to 2,5-diamino-6-ribosylamino-4(3H)-pyrimidinone 5'-phosphate (DARP), formate and pyrophosphate. The sequence is that of Riboflavin biosynthesis protein RibBA from Staphylococcus aureus (strain Mu50 / ATCC 700699).